We begin with the raw amino-acid sequence, 126 residues long: Profilin (126 aa).

It belongs to the profilin family. As to quaternary structure, occurs in many kinds of cells as a complex with monomeric actin in a 1:1 ratio.

Its subcellular location is the cytoplasm. The protein resides in the cytoskeleton. In terms of biological role, binds to actin and affects the structure of the cytoskeleton. At high concentrations, profilin prevents the polymerization of actin, whereas it enhances it at low concentrations. By binding to PIP2, it inhibits the formation of IP3 and DG. The protein is Profilin (PFY1) of Saccharomyces cerevisiae (strain ATCC 204508 / S288c) (Baker's yeast).